Here is a 285-residue protein sequence, read N- to C-terminus: tRNA pseudouridine synthase A (285 aa).

The active-site Nucleophile is aspartate 64. Residue tyrosine 125 participates in substrate binding.

This sequence belongs to the tRNA pseudouridine synthase TruA family. Homodimer.

It catalyses the reaction uridine(38/39/40) in tRNA = pseudouridine(38/39/40) in tRNA. Functionally, formation of pseudouridine at positions 38, 39 and 40 in the anticodon stem and loop of transfer RNAs. The polypeptide is tRNA pseudouridine synthase A (Streptomyces avermitilis (strain ATCC 31267 / DSM 46492 / JCM 5070 / NBRC 14893 / NCIMB 12804 / NRRL 8165 / MA-4680)).